Here is a 145-residue protein sequence, read N- to C-terminus: D-aminoacyl-tRNA deacylase (145 aa).

The short motif at 137-138 (GP) is the Gly-cisPro motif, important for rejection of L-amino acids element.

The protein belongs to the DTD family. Homodimer.

The protein resides in the cytoplasm. The catalysed reaction is glycyl-tRNA(Ala) + H2O = tRNA(Ala) + glycine + H(+). The enzyme catalyses a D-aminoacyl-tRNA + H2O = a tRNA + a D-alpha-amino acid + H(+). Functionally, an aminoacyl-tRNA editing enzyme that deacylates mischarged D-aminoacyl-tRNAs. Also deacylates mischarged glycyl-tRNA(Ala), protecting cells against glycine mischarging by AlaRS. Acts via tRNA-based rather than protein-based catalysis; rejects L-amino acids rather than detecting D-amino acids in the active site. By recycling D-aminoacyl-tRNA to D-amino acids and free tRNA molecules, this enzyme counteracts the toxicity associated with the formation of D-aminoacyl-tRNA entities in vivo and helps enforce protein L-homochirality. The sequence is that of D-aminoacyl-tRNA deacylase from Pseudomonas entomophila (strain L48).